We begin with the raw amino-acid sequence, 608 residues long: Pentatricopeptide repeat-containing protein At5g40410, mitochondrial (608 aa).

A mitochondrion-targeting transit peptide spans 1–28; sequence MIKANVYSCSKFRFLYRRRFLSQSSFVH. PPR repeat units lie at residues 30–64, 65–95, 96–130, 133–167, 168–198, 199–233, 234–268, 269–299, 300–334, 335–365, and 371–401; these read LDAN…VSYR, HGFI…MPER, DLVS…EVGF, NEVT…GVLE, EVKV…LSIK, NLVS…GHEP, DQAT…GFSG, NKCI…ITSP, DSMA…GISP, DHVT…MSKR, and RLDH…MPME. Residues 406-481 form a type E motif region; it reads VWGALLGACR…ASGCSYIEHG (76 aa). The segment at 482–512 is type E(+) motif; sequence NKIHKFVVGDWSHPESEKIQKKLKEIRKKMK. Residues 514-608 form a type DYW motif region; sequence EMGYKSKTEF…DGSCSCSDYW (95 aa).

The protein belongs to the PPR family. PCMP-H subfamily.

The protein resides in the mitochondrion. This chain is Pentatricopeptide repeat-containing protein At5g40410, mitochondrial (PCMP-H15), found in Arabidopsis thaliana (Mouse-ear cress).